The following is a 341-amino-acid chain: HTH-type transcriptional repressor CytR (341 aa).

The HTH lacI-type domain occupies 10 to 64; that stretch reads ATMKDVALKAKVSTATVSRALMNPDKVSQATRNRVEKAAREVGYLPQPMGRNVKR. The segment at residues 12 to 31 is a DNA-binding region (H-T-H motif); the sequence is MKDVALKAKVSTATVSRALM.

Functionally, this protein negatively controls the transcription initiation of genes such as deoCABD, udp, and cdd encoding catabolizing enzymes and nupC, nupG, and tsx encoding transporting and pore-forming proteins. Binds cytidine and adenosine as effectors. The chain is HTH-type transcriptional repressor CytR (cytR) from Escherichia coli (strain K12).